Consider the following 195-residue polypeptide: 7-methyl-GTP pyrophosphatase (195 aa).

D71 (proton acceptor) is an active-site residue.

The protein belongs to the Maf family. YceF subfamily. Requires a divalent metal cation as cofactor.

It localises to the cytoplasm. The enzyme catalyses N(7)-methyl-GTP + H2O = N(7)-methyl-GMP + diphosphate + H(+). Nucleoside triphosphate pyrophosphatase that hydrolyzes 7-methyl-GTP (m(7)GTP). May have a dual role in cell division arrest and in preventing the incorporation of modified nucleotides into cellular nucleic acids. This Shewanella oneidensis (strain ATCC 700550 / JCM 31522 / CIP 106686 / LMG 19005 / NCIMB 14063 / MR-1) protein is 7-methyl-GTP pyrophosphatase.